The primary structure comprises 408 residues: Argininosuccinate synthase (408 aa).

ATP contacts are provided by residues 10–18 (AYSGGLDTS) and Ala37. L-citrulline contacts are provided by Tyr90 and Ser95. Position 120 (Gly120) interacts with ATP. L-aspartate is bound by residues Thr122, Asn126, and Asp127. An L-citrulline-binding site is contributed by Asn126. 5 residues coordinate L-citrulline: Arg130, Ser181, Ser190, Glu266, and Tyr278.

The protein belongs to the argininosuccinate synthase family. Type 1 subfamily. In terms of assembly, homotetramer.

It is found in the cytoplasm. It catalyses the reaction L-citrulline + L-aspartate + ATP = 2-(N(omega)-L-arginino)succinate + AMP + diphosphate + H(+). It functions in the pathway amino-acid biosynthesis; L-arginine biosynthesis; L-arginine from L-ornithine and carbamoyl phosphate: step 2/3. In Cereibacter sphaeroides (strain ATCC 17025 / ATH 2.4.3) (Rhodobacter sphaeroides), this protein is Argininosuccinate synthase.